We begin with the raw amino-acid sequence, 362 residues long: MPNFEQNQVIAVGLSGGVDSSVAALVLKEKGYEVIGLFMQNWETDSKDPFCTAEQDLSDAKAIADHIGIPLYVVNFSKAYWNHVFQHCLDEFAQGRTPNPDVWCNREIKFKSLLDHAKKLGATHLATGHYACIQNENNEYRLLKSNDSHKDQSYFLHLLNQYQLANSVFPIGGYQKSEVRAIAKKRGFINHAKKDSTGICFIGERKFKDFLNEFLLAQPGNIETSEGKIIGKHDGIMFYTVGQRKGLHIGGRPDAGEAPWYVVDKDVKRNVLIVVQGYEHPLLYSQELTCTNLHWIRDTEPSFPLTCKAKTRCRQADQTCVVTRLDNDHCHVQFEHPQRAITRGQSVVFYLGNECLGGGIIN.

ATP contacts are provided by residues 13-20 (GLSGGVDS) and Met-39. The interaction with target base in tRNA stretch occupies residues 99–101 (NPD). The active-site Nucleophile is the Cys-104. A disulfide bond links Cys-104 and Cys-200. Position 128 (Gly-128) interacts with ATP. The interval 150 to 152 (KDQ) is interaction with tRNA. Cys-200 (cysteine persulfide intermediate) is an active-site residue.

This sequence belongs to the MnmA/TRMU family.

Its subcellular location is the cytoplasm. It carries out the reaction S-sulfanyl-L-cysteinyl-[protein] + uridine(34) in tRNA + AH2 + ATP = 2-thiouridine(34) in tRNA + L-cysteinyl-[protein] + A + AMP + diphosphate + H(+). In terms of biological role, catalyzes the 2-thiolation of uridine at the wobble position (U34) of tRNA, leading to the formation of s(2)U34. The protein is tRNA-specific 2-thiouridylase MnmA of Coxiella burnetii (strain RSA 493 / Nine Mile phase I).